The following is a 376-amino-acid chain: MVKQDYYEILGVSKTAEEREIRKAYKRLAMKYHPDRNQGDKEAEAKFKEIKEAYEVLTDSQKRAAYDQYGHAAFEQGGMGGGGFGGGADFSDIFGDVFGDIFGGGRGRQRAARGADLRYNMELTLEEAVRGVTKEIRIPTLEECDVCHGSGAKPGTQPQTCPTCHGSGQVQMRQGFFAVQQTCPHCQGRGTLIKDPCNKCHGHGRVERSKTLSVKIPAGVDTGDRIRLAGEGEAGEHGAPAGDLYVQVQVKQHPIFEREGNNLYCEVPINFAMAALGGEIEVPTLDGRVKLKVPGETQTGKLFRMRGKGVKSVRGGAQGDLLCRVVVETPVGLNERQKQLLQELQESFGGPTGEHNSPRSKSFFDGVKKFFDDLTR.

Positions 5-70 (DYYEILGVSK…QKRAAYDQYG (66 aa)) constitute a J domain. The CR-type zinc finger occupies 131 to 209 (GVTKEIRIPT…CHGHGRVERS (79 aa)). Residues C144, C147, C161, C164, C183, C186, C197, and C200 each coordinate Zn(2+). CXXCXGXG motif repeat units lie at residues 144–151 (CDVCHGSG), 161–168 (CPTCHGSG), 183–190 (CPHCQGRG), and 197–204 (CNKCHGHG).

It belongs to the DnaJ family. Homodimer. Zn(2+) is required as a cofactor.

It localises to the cytoplasm. Functionally, participates actively in the response to hyperosmotic and heat shock by preventing the aggregation of stress-denatured proteins and by disaggregating proteins, also in an autonomous, DnaK-independent fashion. Unfolded proteins bind initially to DnaJ; upon interaction with the DnaJ-bound protein, DnaK hydrolyzes its bound ATP, resulting in the formation of a stable complex. GrpE releases ADP from DnaK; ATP binding to DnaK triggers the release of the substrate protein, thus completing the reaction cycle. Several rounds of ATP-dependent interactions between DnaJ, DnaK and GrpE are required for fully efficient folding. Also involved, together with DnaK and GrpE, in the DNA replication of plasmids through activation of initiation proteins. The sequence is that of Chaperone protein DnaJ from Escherichia coli (strain K12 / MC4100 / BW2952).